A 587-amino-acid chain; its full sequence is MVTAAMLLQRCPVLIRSPTGLLGKMIKTHQFLFGIGRCPILATQGPSFSQIHLKATKAGGDSPSWAKSHCPFMLLELQDGKSKIVQKAAPEVQEDVKTFKTDLPTSLASTSLKKTFSSPQEPEKNSEKVTHLIQNNMAGDHVFGYDQFFRDKIMEKKQDHTYRVFKTVNRWADAYPFAEHFFEASVASKDVSVWCSNDYLGMSRHPRVLQATQEILQRHGAGAGGTRNISGTSKFHVELEQELAELHQKDSALLFSSCFVANDSTLFTLAKILPGCEIYSDAGNHASMIQGIRNSGAAKFVFRHNDPDHLKKLLKKSNPETPKIVAFETVHSMDGAICPLEELCDVAHQYGALTFVDEVHAVGLYGSRGAGIGERDGIMHKIDIISGTLGKAFGCVGGYIASTRDLVDMVRSYAAGFIFTTSLPPMVLSGALESVRLLKGEEGQALRRAHQRNVKHMRQLLMDRGLPVIPCPSHIIPIRVGDAMLNTRICDLLLSKYGIYVQAINYPTVPRGEELLRLAPSPHHSPQMMEDFVEKLLEAWTEVGLPLQDISIAACNFCRRPVHFELMSEWERSYFGNMGPQYVTTYA.

Residues 1-49 (MVTAAMLLQRCPVLIRSPTGLLGKMIKTHQFLFGIGRCPILATQGPSFS) constitute a mitochondrion transit peptide. Residue Arg163 participates in succinyl-CoA binding. Residues Cys258 and Phe259 each contribute to the pyridoxal 5'-phosphate site. Positions 280 and 299 each coordinate succinyl-CoA. Ser332, His360, and Thr388 together coordinate pyridoxal 5'-phosphate. Lys391 is an active-site residue. Lys391 is modified (N6-(pyridoxal phosphate)lysine). Positions 420 and 421 each coordinate pyridoxal 5'-phosphate. Residue Thr508 coordinates succinyl-CoA.

This sequence belongs to the class-II pyridoxal-phosphate-dependent aminotransferase family. Homodimer. Interacts with SUCLA2. Pyridoxal 5'-phosphate serves as cofactor.

It localises to the mitochondrion inner membrane. The enzyme catalyses succinyl-CoA + glycine + H(+) = 5-aminolevulinate + CO2 + CoA. The protein operates within porphyrin-containing compound metabolism; protoporphyrin-IX biosynthesis; 5-aminolevulinate from glycine: step 1/1. In terms of biological role, catalyzes the pyridoxal 5'-phosphate (PLP)-dependent condensation of succinyl-CoA and glycine to form aminolevulinic acid (ALA), with CoA and CO2 as by-products. Contributes significantly to heme formation during erythropoiesis. The protein is 5-aminolevulinate synthase, erythroid-specific, mitochondrial (ALAS2) of Bos taurus (Bovine).